Consider the following 343-residue polypeptide: Dihydroorotase (343 aa).

Residues histidine 14 and histidine 16 each contribute to the Zn(2+) site. Residues 16 to 18 and asparagine 42 each bind substrate; that span reads HVR. Zn(2+)-binding residues include lysine 99, histidine 136, and histidine 174. Lysine 99 bears the N6-carboxylysine mark. Histidine 136 serves as a coordination point for substrate. Leucine 219 is a substrate binding site. A Zn(2+)-binding site is contributed by aspartate 247. Aspartate 247 is an active-site residue. Residues histidine 251 and alanine 263 each contribute to the substrate site.

It belongs to the metallo-dependent hydrolases superfamily. DHOase family. Class II DHOase subfamily. In terms of assembly, homodimer. The cofactor is Zn(2+).

The catalysed reaction is (S)-dihydroorotate + H2O = N-carbamoyl-L-aspartate + H(+). The protein operates within pyrimidine metabolism; UMP biosynthesis via de novo pathway; (S)-dihydroorotate from bicarbonate: step 3/3. In terms of biological role, catalyzes the reversible cyclization of carbamoyl aspartate to dihydroorotate. This is Dihydroorotase from Variovorax paradoxus (strain S110).